Here is a 137-residue protein sequence, read N- to C-terminus: Large ribosomal subunit protein uL16 (137 aa).

Belongs to the universal ribosomal protein uL16 family. As to quaternary structure, part of the 50S ribosomal subunit.

Its function is as follows. Binds 23S rRNA and is also seen to make contacts with the A and possibly P site tRNAs. This is Large ribosomal subunit protein uL16 from Chelativorans sp. (strain BNC1).